The following is a 117-amino-acid chain: Large ribosomal subunit protein bL20 (117 aa).

It belongs to the bacterial ribosomal protein bL20 family.

Functionally, binds directly to 23S ribosomal RNA and is necessary for the in vitro assembly process of the 50S ribosomal subunit. It is not involved in the protein synthesizing functions of that subunit. This Mesomycoplasma hyopneumoniae (strain J / ATCC 25934 / NCTC 10110) (Mycoplasma hyopneumoniae) protein is Large ribosomal subunit protein bL20.